Consider the following 354-residue polypeptide: UDP-3-O-acylglucosamine N-acyltransferase (354 aa).

The active-site Proton acceptor is the His-257.

It belongs to the transferase hexapeptide repeat family. LpxD subfamily. As to quaternary structure, homotrimer.

The catalysed reaction is a UDP-3-O-[(3R)-3-hydroxyacyl]-alpha-D-glucosamine + a (3R)-hydroxyacyl-[ACP] = a UDP-2-N,3-O-bis[(3R)-3-hydroxyacyl]-alpha-D-glucosamine + holo-[ACP] + H(+). Its pathway is bacterial outer membrane biogenesis; LPS lipid A biosynthesis. Catalyzes the N-acylation of UDP-3-O-acylglucosamine using 3-hydroxyacyl-ACP as the acyl donor. Is involved in the biosynthesis of lipid A, a phosphorylated glycolipid that anchors the lipopolysaccharide to the outer membrane of the cell. This Rhizobium johnstonii (strain DSM 114642 / LMG 32736 / 3841) (Rhizobium leguminosarum bv. viciae) protein is UDP-3-O-acylglucosamine N-acyltransferase.